The chain runs to 116 residues: Ribonuclease P protein component (116 aa).

Belongs to the RnpA family. Consists of a catalytic RNA component (M1 or rnpB) and a protein subunit.

It catalyses the reaction Endonucleolytic cleavage of RNA, removing 5'-extranucleotides from tRNA precursor.. In terms of biological role, RNaseP catalyzes the removal of the 5'-leader sequence from pre-tRNA to produce the mature 5'-terminus. It can also cleave other RNA substrates such as 4.5S RNA. The protein component plays an auxiliary but essential role in vivo by binding to the 5'-leader sequence and broadening the substrate specificity of the ribozyme. The protein is Ribonuclease P protein component of Bacillus velezensis (strain DSM 23117 / BGSC 10A6 / LMG 26770 / FZB42) (Bacillus amyloliquefaciens subsp. plantarum).